The following is a 363-amino-acid chain: Peptide chain release factor 2 (363 aa).

An N5-methylglutamine modification is found at Q251.

The protein belongs to the prokaryotic/mitochondrial release factor family. In terms of processing, methylated by PrmC. Methylation increases the termination efficiency of RF2.

It localises to the cytoplasm. Its function is as follows. Peptide chain release factor 2 directs the termination of translation in response to the peptide chain termination codons UGA and UAA. The protein is Peptide chain release factor 2 of Helicobacter pylori (strain Shi470).